An 868-amino-acid polypeptide reads, in one-letter code: MREKPEGGKGMAEHTPLMKQYFAAKAEYPDLLLFFRMGDFYELFHQDARKAARLLDITLTQRGSSGGTPIPMAGVPVHAYEGYLARLIALGESVAICEQIGDPGLAKGLVERKVVRIVTPGTITEEALLEERRDTLLMALSRTKNCYGLAWADLAGGRFLVNEVDSEEALEAELARLEPAELLLPDEDAWPEYLQQRNGVRRRPPWLFDADSGRRKLLAFFKLHDLSGFGIENNPQATAAAGALLGYIEETQKQRLPHLTSITMETVGEAITMNAATRRHLELDTRVDGESRHTLLGVLDSTVTPMGGRLLRRWLHRPLRLREVVRQRHAAVGSMIDSDLDNKLRETFRRLGDMERILTRVALRSARPRDISTLRDSLSLLPRLRELLNASDSPRLRVLYAELGEHDSTASLLVKAVAEQPPLKLTDGGVIAPEYDVELDELRKLSNNADQFLIDLETRERESSGISTLKVGYNRVHGYYIEISKGQADKAPVHYTRRQTLTNAERYITEELKAFEDKVLSARDRALAREKLLYEQLLDTVGAQLEPLKRCAAALSELDVLVCFAERAQTLDWVRPELEHTSCLHIEGGRHPVVEAVREQRFEPNDLYLHPERRMLVITGPNMGGKSTYMRQNALIVLLAYIGSYVPASRALIGPIDRIMTRIGAGDDLARGQSTFMLEMTETSYILHHATAQSLVLMDEIGRGTSTYDGLALADAVARHLAHINRCYTLFATHYFELTALAEETYEGGLSGIANVHFDAVEHSERLVFMHTVKDGPANRSFGLQVAALAGLPAATVAQARRRLAELEQRGRESHVSEITQLELDAPQQCNLFASAPSAAQEALVALHPDELTPKQALEALYRLKALL.

ATP is bound at residue 620–627 (GPNMGGKS).

This sequence belongs to the DNA mismatch repair MutS family.

Its function is as follows. This protein is involved in the repair of mismatches in DNA. It is possible that it carries out the mismatch recognition step. This protein has a weak ATPase activity. This chain is DNA mismatch repair protein MutS, found in Xylella fastidiosa (strain Temecula1 / ATCC 700964).